The chain runs to 87 residues: uncharacterized protein (87 aa).

A disordered region spans residues 43–87 (NQGYGQNFGDASGFMGTRSHVDDRDQIDSPASFESEAVNSSIKRK).

This is an uncharacterized protein from Bacillus subtilis (strain 168).